The sequence spans 1191 residues: Putative glycoside hydrolase 22789 (1191 aa).

The segment covering 173 to 187 (PSSSGASSVLPSPSA) has biased composition (low complexity). Residues 173 to 221 (PSSSGASSVLPSPSAHTPDAATDANHLPNPDPASGRQELTRAGRPARKK) are disordered.

Belongs to the glycoside hydrolase-like 3 (GHL3) family.

In Monosiga brevicollis (Choanoflagellate), this protein is Putative glycoside hydrolase 22789.